Consider the following 88-residue polypeptide: Beta-insect excitatory toxin LqhIT1d (88 aa).

An N-terminal signal peptide occupies residues 1–18 (MKFFLLFLVVLPIMGVLG). An LCN-type CS-alpha/beta domain is found at 20–83 (KNGFAVDSNG…ISDTRKKLCD (64 aa)). 4 cysteine pairs are disulfide-bonded: cysteine 34–cysteine 55, cysteine 40–cysteine 60, cysteine 44–cysteine 62, and cysteine 56–cysteine 82.

This sequence belongs to the long (4 C-C) scorpion toxin superfamily. Sodium channel inhibitor family. Beta subfamily. In terms of tissue distribution, expressed by the venom gland.

It localises to the secreted. Excitatory insect toxins induce a spastic paralysis. They bind voltage-independently at site-4 of sodium channels (Nav) and shift the voltage of activation toward more negative potentials thereby affecting sodium channel activation and promoting spontaneous and repetitive firing. The polypeptide is Beta-insect excitatory toxin LqhIT1d (Leiurus hebraeus (Hebrew deathstalker scorpion)).